The sequence spans 118 residues: Small ribosomal subunit protein mS41 (118 aa).

The N-terminal 24 residues, 1–24 (MLRVVAKAQYPAAVRCFSTSHAAF), are a transit peptide targeting the mitochondrion.

The protein belongs to the mitochondrion-specific ribosomal protein mS41 family.

It is found in the mitochondrion. Involved in telomere length regulation. This Yarrowia lipolytica (strain CLIB 122 / E 150) (Yeast) protein is Small ribosomal subunit protein mS41 (FYV4).